Reading from the N-terminus, the 179-residue chain is Large ribosomal subunit protein uL6 (179 aa).

This sequence belongs to the universal ribosomal protein uL6 family. In terms of assembly, part of the 50S ribosomal subunit.

Its function is as follows. This protein binds to the 23S rRNA, and is important in its secondary structure. It is located near the subunit interface in the base of the L7/L12 stalk, and near the tRNA binding site of the peptidyltransferase center. This is Large ribosomal subunit protein uL6 from Spiroplasma kunkelii.